A 484-amino-acid polypeptide reads, in one-letter code: Perphorin-2 (484 aa).

Residues Asn-16, Asn-240, Asn-256, Asn-265, Asn-326, Asn-330, Asn-356, and Asn-411 are each glycosylated (N-linked (GlcNAc...) asparagine).

The protein localises to the secreted. It localises to the extracellular space. The protein resides in the extracellular matrix. Its function is as follows. May be involved in conversion of asexual males and females to the sexual pathway. The protein is Perphorin-2 of Volvox carteri (Green alga).